The primary structure comprises 315 residues: Small ribosomal subunit protein mS45 (315 aa).

Residues 1-66 constitute a mitochondrion transit peptide; the sequence is MRNSVEFSQL…SKYVACNSRS (66 aa).

Belongs to the mitochondrion-specific ribosomal protein mS45 family. In terms of assembly, component of the mitochondrial small ribosomal subunit (mt-SSU). Mature yeast 74S mitochondrial ribosomes consist of a small (37S) and a large (54S) subunit. The 37S small subunit contains a 15S ribosomal RNA (15S mt-rRNA) and at least 32 different proteins. The 54S large subunit contains a 21S rRNA (21S mt-rRNA) and at least 45 different proteins.

The protein resides in the mitochondrion. Component of the mitochondrial ribosome (mitoribosome), a dedicated translation machinery responsible for the synthesis of mitochondrial genome-encoded proteins, including at least some of the essential transmembrane subunits of the mitochondrial respiratory chain. The mitoribosomes are attached to the mitochondrial inner membrane and translation products are cotranslationally integrated into the membrane. Required for mitochondrial protein synthesis. Has a role in mitochondrial integrity and cell respiration. The protein is Small ribosomal subunit protein mS45 (bot1) of Schizosaccharomyces pombe (strain 972 / ATCC 24843) (Fission yeast).